The primary structure comprises 190 residues: Potassium-transporting ATPase KdpC subunit (190 aa).

Residues 10–30 traverse the membrane as a helical segment; sequence TFIFLLLITGGVYPLLTTVLG.

It belongs to the KdpC family. As to quaternary structure, the system is composed of three essential subunits: KdpA, KdpB and KdpC.

Its subcellular location is the cell inner membrane. Functionally, part of the high-affinity ATP-driven potassium transport (or Kdp) system, which catalyzes the hydrolysis of ATP coupled with the electrogenic transport of potassium into the cytoplasm. This subunit acts as a catalytic chaperone that increases the ATP-binding affinity of the ATP-hydrolyzing subunit KdpB by the formation of a transient KdpB/KdpC/ATP ternary complex. The protein is Potassium-transporting ATPase KdpC subunit of Escherichia coli (strain SE11).